A 772-amino-acid chain; its full sequence is Semaphorin-3A (772 aa).

Residues 1 to 20 form the signal peptide; that stretch reads MGWFTGIACLFWGVLLTARA. Residues 31 to 514 form the Sema domain; that stretch reads RLKLSYKEML…STAGVAQLPL (484 aa). N-linked (GlcNAc...) asparagine glycosylation is present at N53. A disulfide bond links C103 and C114. The N-linked (GlcNAc...) asparagine glycan is linked to N125. 4 disulfides stabilise this stretch: C132–C141, C269–C381, C293–C341, and C517–C535. In terms of domain architecture, Ig-like C2-type spans 579–665; it reads PSLEERIIYG…GFMQTLLKVT (87 aa). An N-linked (GlcNAc...) asparagine glycan is attached at N591. C650 and C723 form a disulfide bridge. The segment covering 729-738 has biased composition (basic residues); it reads RDRKQRRQRP. Residues 729–772 form a disordered region; the sequence is RDRKQRRQRPGHSQGSSNKWKHMQESKKGRNRRTHEFERAPRSV. Over residues 750 to 772 the composition is skewed to basic and acidic residues; the sequence is HMQESKKGRNRRTHEFERAPRSV.

It belongs to the semaphorin family. In terms of assembly, interacts with PXND1.

Its subcellular location is the secreted. In terms of biological role, plays a role in growth cones guidance. May function to pattern sensory projections by selectively repelling axons that normally terminate dorsally. Involved in the development of the olfactory system and in neuronal control of puberty. The polypeptide is Semaphorin-3A (Sema3a) (Mus musculus (Mouse)).